A 72-amino-acid polypeptide reads, in one-letter code: UPF0270 protein PM1156 (72 aa).

Belongs to the UPF0270 family.

The chain is UPF0270 protein PM1156 from Pasteurella multocida (strain Pm70).